Here is an 811-residue protein sequence, read N- to C-terminus: TLR4 interactor with leucine rich repeats (811 aa).

A signal peptide spans 1 to 25 (MEGVGAVRFWLVVCGCLAFPPRAES). The region spanning 26 to 57 (VCPERCDCQHPQHLLCTNRGLRAVPKTSSLPS) is the LRRNT domain. Topologically, residues 26 to 696 (VCPERCDCQH…AGGRGGVDYQ (671 aa)) are extracellular. LRR repeat units lie at residues 61–81 (VLTYSLGGNFITNITAFDFHR), 84–105 (QLRRLDLQYNQIRSLHPKTFEK), 108–129 (RLEELYLGNNLLQALAPGTLAP), 132–153 (KLRILYANGNEIGRLSRGSFEG), 156–177 (SLVKLRLDGNVLGALPDAVFAP), 180–201 (NLLYLHLEANRIRFLGKNAFTQ), 204–223 (KLRFLNLSANELQPSLRHAA), 230–251 (SLSTLILSANSLQHLGPRVFQH), 254–275 (RLGLLSLSGNQLTHLAPEAFWG), 278–298 (ALRELRLEGNRLNQLPLTLLE), 302–323 (SLEALDLSGNELSALHPATFGH), and 326–347 (RLRELSLRDNALSALSGDIFAA). A glycan (N-linked (GlcNAc...) asparagine) is linked at Asn-73. One can recognise an LRRCT domain in the interval 359 to 416 (NGWTCDCRLRGLKRWMGNWHSQGRLLTVFVQCRHPPALRGKYLDYLDDQLLQNGSCVD). N-linked (GlcNAc...) asparagine glycosylation occurs at Asn-411. Disordered stretches follow at residues 414–460 (CVDP…QQRG) and 486–562 (RRGP…QQGR). Residues 421-430 (PTAGSRQWPI) are compositionally biased toward polar residues. 2 stretches are compositionally biased toward low complexity: residues 440-460 (PPAGLAQELPLQPQPQPQQRG) and 494-508 (QSPSAAAASGSAPQS). Residues 510-519 (DLHEKPERGR) show a composition bias toward basic and acidic residues. The segment covering 524–545 (NLPQTEPTPTSEPASGTPSARD) has biased composition (polar residues). An N-linked (GlcNAc...) asparagine glycan is attached at Asn-589. Residues 697 to 717 (LLTLVLLAINALLVLLALAAW) traverse the membrane as a helical segment. Over 718–809 (GSRWLRRKLR…RREDHLLQRF (92 aa)) the chain is Cytoplasmic. A Phosphoserine modification is found at Ser-798.

In terms of assembly, belongs to the lipopolysaccharide (LPS) receptor, a multi-protein complex containing at least CD14, MD-2 and TLR4. Interacts with TLR4; this interaction is greatly enhanced following LPS stimulation. Interacts with LPS. Post-translationally, N-glycolysaled. As to expression, highly expressed in cortical astrocytes and in cerebellar granule neurons.

It localises to the membrane. Its function is as follows. Component of the TLR4 signaling complex. Mediates the innate immune response to bacterial lipopolysaccharide (LPS) leading to cytokine secretion and the inflammatory response. The protein is TLR4 interactor with leucine rich repeats (Tril) of Rattus norvegicus (Rat).